The following is a 522-amino-acid chain: Cytochrome b mRNA maturase bI3 (522 aa).

At 1–31 (MTIRKSNPYLSLVNSYLMDSPQPSSMNYWWN) the chain is on the mitochondrial matrix side. The tract at residues 1 to 163 (MTIRKSNPYL…MPFMGGDLVP (163 aa)) is cytochrome b. The helical transmembrane segment at 32 to 52 (VGSLLGLCLVMQMASGMFLAM) threads the bilayer. The Mitochondrial intermembrane portion of the chain corresponds to 53-84 (HYSSSMELAFNSVEHMMRDVNAGWLMRYIHAN). Residues 85–105 (GASFFFMCLYLHMGKALYYGS) form a helical membrane-spanning segment. Over 106 to 110 (YKSPR) the chain is Mitochondrial matrix. A helical membrane pass occupies residues 111–131 (VLVWSMGVMMFMLTMATAFMG). Residues 132-154 (YCLVYGQMSHWGATVITNLLSAM) lie on the Mitochondrial intermembrane side of the membrane. Residues 155–175 (PFMGGDLVPLSIILSLYLLYI) form a helical membrane-spanning segment. The maturase stretch occupies residues 164–522 (LSIILSLYLL…PYMSWHQKEQ (359 aa)). Residues 176–522 (SLKTFMKMIF…PYMSWHQKEQ (347 aa)) lie on the Mitochondrial matrix side of the membrane.

This sequence in the N-terminal section; belongs to the cytochrome b family. In the C-terminal section; belongs to the LAGLIDADG endonuclease family.

It localises to the mitochondrion inner membrane. Mitochondrial mRNA maturase required for splicing of intron 3 of the cytochrome b (COB) gene, containing its own coding sequence. This chain is Cytochrome b mRNA maturase bI3 (bI3), found in Debaryomyces hansenii (strain ATCC 36239 / CBS 767 / BCRC 21394 / JCM 1990 / NBRC 0083 / IGC 2968) (Yeast).